Consider the following 215-residue polypeptide: Ras-related protein Rab-5B (215 aa).

An N-acetylthreonine modification is found at T2. GTP-binding residues include S29, A30, G32, K33, S34, S35, H46, E47, T52, and G78. Residue S34 coordinates Mg(2+). 2 short sequence motifs (switch) span residues 44–56 and 77–93; these read QFHE…IGAA and AGQE…YRGA. A Mg(2+)-binding site is contributed by T52. S84 carries the post-translational modification Phosphoserine; by LRRK2. N133, K134, D136, A164, and K165 together coordinate GTP. The interval 186–215 is disordered; that stretch reads PQNLGGAAGRSRGVDLHEQSQQNKSQCCSN. The segment covering 204–215 has biased composition (low complexity); the sequence is QSQQNKSQCCSN. Residues C212 and C213 are each lipidated (S-geranylgeranyl cysteine).

The protein belongs to the small GTPase superfamily. Rab family. In terms of assembly, binds EEA1. Interacts with RIN2 and RIN3, which probably regulate its pathway, possibly by acting as GEFs. Interacts with GDI1, GDI2, CHML and CHM; phosphorylation at Ser-84 disrupts this interaction. The cofactor is Mg(2+). Phosphorylation of Ser-84 in the switch II region by LRRK2 prevents the association of RAB regulatory proteins, including CHM, CHML and RAB GDP dissociation inhibitors GDI1 and GDI2. In terms of processing, (Microbial infection) Glycosylated on arginine residues by S.typhimurium protein Ssek3.

It is found in the cell membrane. Its subcellular location is the early endosome membrane. The protein resides in the melanosome. The enzyme catalyses GTP + H2O = GDP + phosphate + H(+). With respect to regulation, regulated by guanine nucleotide exchange factors (GEFs) which promote the exchange of bound GDP for free GTP. Regulated by GTPase activating proteins (GAPs) which increase the GTP hydrolysis activity. Inhibited by GDP dissociation inhibitors (GDIs). Its function is as follows. The small GTPases Rab are key regulators of intracellular membrane trafficking, from the formation of transport vesicles to their fusion with membranes. Rabs cycle between an inactive GDP-bound form and an active GTP-bound form that is able to recruit to membranes different sets of downstream effectors directly responsible for vesicle formation, movement, tethering and fusion. This chain is Ras-related protein Rab-5B, found in Homo sapiens (Human).